The chain runs to 115 residues: U3-lycotoxin-Ls1p (115 aa).

The N-terminal stretch at 1–20 (MKFVLLFGVLLVTLFSYSSA) is a signal peptide. Residues 21-44 (EMFDDFDQADEDELLSLIEKEEAR) constitute a propeptide that is removed on maturation. 4 cysteine pairs are disulfide-bonded: Cys48-Cys63, Cys55-Cys72, Cys62-Cys87, and Cys74-Cys85.

It belongs to the neurotoxin 19 (CSTX) family. 01 subfamily. In terms of tissue distribution, expressed by the venom gland.

Its subcellular location is the secreted. In Lycosa singoriensis (Wolf spider), this protein is U3-lycotoxin-Ls1p.